We begin with the raw amino-acid sequence, 153 residues long: Superoxide dismutase [Cu-Zn] (153 aa).

Cu cation-binding residues include histidine 45, histidine 47, and histidine 62. A disulfide bond links cysteine 56 and cysteine 145. 4 residues coordinate Zn(2+): histidine 62, histidine 70, histidine 79, and aspartate 82. Cu cation is bound at residue histidine 119.

Belongs to the Cu-Zn superoxide dismutase family. As to quaternary structure, homodimer. Cu cation is required as a cofactor. Zn(2+) serves as cofactor.

The protein resides in the cytoplasm. The enzyme catalyses 2 superoxide + 2 H(+) = H2O2 + O2. Destroys radicals which are normally produced within the cells and which are toxic to biological systems. The protein is Superoxide dismutase [Cu-Zn] (Sod) of Chymomyza amoena.